A 542-amino-acid polypeptide reads, in one-letter code: Chaperonin GroEL (542 aa).

ATP-binding positions include 29–32 (TLGP), 86–90 (DGTTT), Gly-413, and Asp-493.

The protein belongs to the chaperonin (HSP60) family. In terms of assembly, forms a cylinder of 14 subunits composed of two heptameric rings stacked back-to-back. Interacts with the co-chaperonin GroES.

The protein localises to the cytoplasm. The enzyme catalyses ATP + H2O + a folded polypeptide = ADP + phosphate + an unfolded polypeptide.. In terms of biological role, together with its co-chaperonin GroES, plays an essential role in assisting protein folding. The GroEL-GroES system forms a nano-cage that allows encapsulation of the non-native substrate proteins and provides a physical environment optimized to promote and accelerate protein folding. The polypeptide is Chaperonin GroEL (Elusimicrobium minutum (strain Pei191)).